Reading from the N-terminus, the 101-residue chain is Small ribosomal subunit protein uS14 (101 aa).

This sequence belongs to the universal ribosomal protein uS14 family. Part of the 30S ribosomal subunit. Contacts proteins S3 and S10.

Functionally, binds 16S rRNA, required for the assembly of 30S particles and may also be responsible for determining the conformation of the 16S rRNA at the A site. The polypeptide is Small ribosomal subunit protein uS14 (Synechococcus sp. (strain JA-2-3B'a(2-13)) (Cyanobacteria bacterium Yellowstone B-Prime)).